The following is a 162-amino-acid chain: uncharacterized protein (162 aa).

Transmembrane regions (helical) follow at residues 15–35 (VLAIFIVLLIISAYLGFAPAL), 43–63 (VCHFFVFFLLTLVFYWVFDLS), 70–90 (LTILVCGVFGGLGSEFVQSFL), and 97–117 (LFDIVANLLGCSLALLLNILY).

Its subcellular location is the membrane. This is an uncharacterized protein from Schizosaccharomyces pombe (strain 972 / ATCC 24843) (Fission yeast).